The chain runs to 570 residues: Putative diflavin flavoprotein A 6 (570 aa).

The segment at alanine 38–histidine 231 is zinc metallo-hydrolase. The 143-residue stretch at valine 260 to lysine 402 folds into the Flavodoxin-like domain. The segment at valine 421 to tyrosine 570 is flavodoxin-reductase-like.

The protein in the N-terminal section; belongs to the zinc metallo-hydrolase group 3 family. In the C-terminal section; belongs to the flavodoxin reductase family. Fe cation serves as cofactor.

Its function is as follows. Mediates electron transfer from NADH to oxygen, reducing it to water. This modular protein has 3 redox cofactors, in other organisms the same activity requires 2 or 3 proteins. The sequence is that of Putative diflavin flavoprotein A 6 (dfa6) from Nostoc sp. (strain PCC 7120 / SAG 25.82 / UTEX 2576).